Here is a 942-residue protein sequence, read N- to C-terminus: AP-1 complex subunit beta (942 aa).

HEAT repeat units lie at residues 45-82 (KDVS…NHPD), 117-154 (NITE…VNPE), 156-193 (VENQ…VSKK), 273-313 (DVIR…KRPE), 384-421 (RASE…KYPN), and 458-495 (DNAH…KRPK). The interval 590–700 (GLRNKEEEDE…NDLSFLGGGG (111 aa)) is disordered. A compositionally biased stretch (acidic residues) spans 596 to 609 (EEDEEEPDYVDDDN). Low complexity-rich tracts occupy residues 613 to 645 (QQGG…QQQP) and 664 to 677 (NNNN…NNNN). Residues 678 to 693 (MYSPQPQQFNGNSNDL) are compositionally biased toward polar residues.

This sequence belongs to the adaptor complexes large subunit family. In terms of assembly, adaptor protein complex 1 (AP-1) is a heterotetramer composed of two large adaptins (gamma-type subunit and beta-type subunit), a medium adaptin (mu-type subunit) and a small adaptin (sigma-type subunit).

It localises to the golgi apparatus. It is found in the trans-Golgi network. The protein localises to the cytoplasmic vesicle. Its subcellular location is the clathrin-coated vesicle membrane. Functionally, subunit of clathrin-associated adaptor protein complex 1 that plays a role in protein sorting in the trans-Golgi network (TGN) and endosomes. The AP complexes mediate the recruitment of clathrin to membranes and the recognition of sorting signals within the cytosolic tails of transmembrane cargo molecules. Also involved in early steps of phagocytosis and macropinocytosis. The polypeptide is AP-1 complex subunit beta (ap1b1) (Dictyostelium discoideum (Social amoeba)).